Consider the following 345-residue polypeptide: uncharacterized protein (345 aa).

Positions 1–13 are enriched in polar residues; that stretch reads MSKPNTETISVNI. Positions 1–23 are disordered; the sequence is MSKPNTETISVNIPESEGVPLPD. A coiled-coil region spans residues 283–316; that stretch reads SLKQRTNILKKQGETLKKNVEDINKDTSNLKRHA.

The protein resides in the virion. This is an uncharacterized protein from Acanthamoeba polyphaga mimivirus (APMV).